Here is a 321-residue protein sequence, read N- to C-terminus: Aspartate carbamoyltransferase catalytic subunit (321 aa).

Carbamoyl phosphate-binding residues include Arg65 and Thr66. Residue Lys93 coordinates L-aspartate. Positions 115, 143, and 146 each coordinate carbamoyl phosphate. 2 residues coordinate L-aspartate: Arg176 and Arg230. Carbamoyl phosphate contacts are provided by Gly271 and Pro272.

It belongs to the aspartate/ornithine carbamoyltransferase superfamily. ATCase family. In terms of assembly, heterododecamer (2C3:3R2) of six catalytic PyrB chains organized as two trimers (C3), and six regulatory PyrI chains organized as three dimers (R2).

It catalyses the reaction carbamoyl phosphate + L-aspartate = N-carbamoyl-L-aspartate + phosphate + H(+). It functions in the pathway pyrimidine metabolism; UMP biosynthesis via de novo pathway; (S)-dihydroorotate from bicarbonate: step 2/3. Its function is as follows. Catalyzes the condensation of carbamoyl phosphate and aspartate to form carbamoyl aspartate and inorganic phosphate, the committed step in the de novo pyrimidine nucleotide biosynthesis pathway. The sequence is that of Aspartate carbamoyltransferase catalytic subunit from Bartonella henselae (strain ATCC 49882 / DSM 28221 / CCUG 30454 / Houston 1) (Rochalimaea henselae).